Reading from the N-terminus, the 121-residue chain is Ribosome-binding factor A (121 aa).

This sequence belongs to the RbfA family. Monomer. Binds 30S ribosomal subunits, but not 50S ribosomal subunits or 70S ribosomes.

Its subcellular location is the cytoplasm. Functionally, one of several proteins that assist in the late maturation steps of the functional core of the 30S ribosomal subunit. Associates with free 30S ribosomal subunits (but not with 30S subunits that are part of 70S ribosomes or polysomes). Required for efficient processing of 16S rRNA. May interact with the 5'-terminal helix region of 16S rRNA. The polypeptide is Ribosome-binding factor A (Hydrogenovibrio crunogenus (strain DSM 25203 / XCL-2) (Thiomicrospira crunogena)).